Here is a 323-residue protein sequence, read N- to C-terminus: MKPSVILYKTLPDDLLQRLEEHFSVTQVKNLRPETVSQHAEAFAQAEGLLGSSEKVDAALLEKMPKLRATSTVSVGYDNFDVEALNARRVLLMHTPTVLTETVADTVMALVLSTARRVVEVAERVKAGEWTKSIGPDWFGTDVHHKTLGIVGMGRIGMALAQRAHFGFGMPILYNARRQHPQAEERFNARYCDLDTLLQEADFVCLILPLSEETHHLFGQAQFAKMKSSAIFINAGRGPVVDEQALIAALQNGEIHAAGLDVFEHEPLAKDSPLLSLPNVVALPHIGSATHETRYNMAACAVDNLIDALNGNVEKNCVNPQVK.

Catalysis depends on residues Arg237 and Glu266. His285 (proton donor) is an active-site residue.

It belongs to the D-isomer specific 2-hydroxyacid dehydrogenase family. GhrB subfamily. As to quaternary structure, homodimer.

It is found in the cytoplasm. The catalysed reaction is glycolate + NADP(+) = glyoxylate + NADPH + H(+). It catalyses the reaction (R)-glycerate + NAD(+) = 3-hydroxypyruvate + NADH + H(+). It carries out the reaction (R)-glycerate + NADP(+) = 3-hydroxypyruvate + NADPH + H(+). Catalyzes the NADPH-dependent reduction of glyoxylate and hydroxypyruvate into glycolate and glycerate, respectively. This is Glyoxylate/hydroxypyruvate reductase B from Klebsiella pneumoniae subsp. pneumoniae (strain ATCC 700721 / MGH 78578).